We begin with the raw amino-acid sequence, 625 residues long: DNA-directed RNA polymerase subunit gamma (625 aa).

Zn(2+)-binding residues include Cys-71, Cys-73, Cys-86, and Cys-89. Mg(2+)-binding residues include Asp-467, Asp-469, and Asp-471.

It belongs to the RNA polymerase beta' chain family. RpoC1 subfamily. In terms of assembly, in cyanobacteria the RNAP catalytic core is composed of 2 alpha, 1 beta, 1 beta', 1 gamma and 1 omega subunit. When a sigma factor is associated with the core the holoenzyme is formed, which can initiate transcription. The cofactor is Mg(2+). It depends on Zn(2+) as a cofactor.

It carries out the reaction RNA(n) + a ribonucleoside 5'-triphosphate = RNA(n+1) + diphosphate. Functionally, DNA-dependent RNA polymerase catalyzes the transcription of DNA into RNA using the four ribonucleoside triphosphates as substrates. This is DNA-directed RNA polymerase subunit gamma from Nostoc punctiforme (strain ATCC 29133 / PCC 73102).